Here is a 284-residue protein sequence, read N- to C-terminus: tRNA N(3)-cytidine methyltransferase METTL6 (284 aa).

Positions 45 and 49 each coordinate S-adenosyl-L-methionine. S-adenosyl-L-homocysteine-binding residues include Tyr49, His61, Glu85, Gly87, Asp110, Asp136, Leu137, and Ile157. Residues Gly87, Asp110, Asp136, Leu137, and Ile157 each contribute to the S-adenosyl-L-methionine site.

This sequence belongs to the methyltransferase superfamily. METL family. In terms of assembly, monomer. Interacts with SARS1/SerRS; interaction is mediated via tRNA(Ser) and is required for N(3)-methylcytidine methylation.

The protein localises to the cytoplasm. Its subcellular location is the nucleus. The catalysed reaction is cytidine(32) in tRNA(Ser) + S-adenosyl-L-methionine = N(3)-methylcytidine(32) in tRNA(Ser) + S-adenosyl-L-homocysteine + H(+). Functionally, S-adenosyl-L-methionine-dependent methyltransferase that mediates N(3)-methylcytidine modification of residue 32 of the tRNA anticodon loop of tRNA(Ser), including tRNA(Ser)(UGA) and tRNA(Ser)(GCU). Interaction with SARS1/SerRS is required for N(3)-methylcytidine methylation. This Homo sapiens (Human) protein is tRNA N(3)-cytidine methyltransferase METTL6.